We begin with the raw amino-acid sequence, 105 residues long: Small ribosomal subunit protein eS26 (105 aa).

Belongs to the eukaryotic ribosomal protein eS26 family. In terms of assembly, component of the small ribosomal subunit.

The protein localises to the cytoplasm. The sequence is that of Small ribosomal subunit protein eS26 (RPS26) from Encephalitozoon cuniculi (strain GB-M1) (Microsporidian parasite).